The following is a 250-amino-acid chain: Membrane-spanning 4-domains subfamily A member 8 (250 aa).

The Cytoplasmic portion of the chain corresponds to 1–74 (MNSMTSAVPV…ALKEGKTLGA (74 aa)). Residues 75–95 (IQIIIGLAHIGLGSIMATVLV) traverse the membrane as a helical segment. Topologically, residues 96 to 98 (GEY) are extracellular. Residues 99-119 (LSISFYGGFPFWGGLWFIISG) form a helical membrane-spanning segment. At 120–136 (SLSVAAENQPYSYCLLS) the chain is on the cytoplasmic side. Residues 137–157 (GSLGLNIVSAICSAVGVILFI) traverse the membrane as a helical segment. The Extracellular portion of the chain corresponds to 158–180 (TDLSIPHPYAYPDYYPYAWGVNP). The chain crosses the membrane as a helical span at residues 181–201 (GMAISGVLLVFCLLEFGIACA). Topologically, residues 202–250 (SSHFGCQLVCCQSSNVSVIYPNIYAANPVITPEPVTSPPSYSSEIQANK) are cytoplasmic.

It belongs to the MS4A family. Expressed by hematopoietic tissues and cells lines.

Its subcellular location is the membrane. Its function is as follows. May be involved in signal transduction as a component of a multimeric receptor complex. This is Membrane-spanning 4-domains subfamily A member 8 (MS4A8) from Homo sapiens (Human).